The primary structure comprises 495 residues: MAVNVRDYIAENYGLFINGEFVKGSSDETIEVTNPATGETLSHITRAKDKDVDHAVKVAQEAFESWSLTSKSERAQMLRDIGDKLMAQKDKIAMIETLNNGKPIRETTAIDIPFAARHFHYFASVIETEEGTVNDIDKDTMSIVRHEPIGVVGAVVAWNFPMLLAAWKIAPAIAAGNTIVIQPSSSTPLSLLEVAKIFQEVLPKGVVNILTGKGSESGNAIFNHDGVDKLSFTGSTDVGYQVAEAAAKHLVPATLELGGKSANIILDDANLDLAVEGIQLGILFNQGEVCSAGSRLLVHEKIYDQLVPRLQEAFSNIKVGNPQDEATQMGSQTGKDQLDKIQSYIDAAKESDAQILAGGHRLTENGLDKGFFFEPTLIAVPDNHHKLAQEEIFGPVLTVIKVKDDQEAIDIANDSEYGLAGGVFSQNITRALNIAKAVRTGRIWINTYNQVPEGAPFGGYKKSGIGRETYKGALSNYQQVKNIYIDTSNALKGLY.

212 to 218 contributes to the NAD(+) binding site; the sequence is GKGSESG. Active-site residues include glutamate 256 and cysteine 290.

Belongs to the aldehyde dehydrogenase family.

The enzyme catalyses an aldehyde + NAD(+) + H2O = a carboxylate + NADH + 2 H(+). In Staphylococcus aureus (strain USA300), this protein is Putative aldehyde dehydrogenase AldA (aldA).